Reading from the N-terminus, the 151-residue chain is Small ribosomal subunit protein uS15 (151 aa).

This sequence belongs to the universal ribosomal protein uS15 family.

The chain is Small ribosomal subunit protein uS15 (RPS13) from Wuchereria bancrofti.